Reading from the N-terminus, the 126-residue chain is CD59 glycoprotein (126 aa).

An N-terminal signal peptide occupies residues 1–22 (MRARRGFILLLLLAVLCSTGVS). The UPAR/Ly6 domain occupies 23–110 (LRCYNCLDPV…NGAISLLGKT (88 aa)). 5 cysteine pairs are disulfide-bonded: cysteine 25-cysteine 48, cysteine 28-cysteine 35, cysteine 41-cysteine 61, cysteine 67-cysteine 85, and cysteine 86-cysteine 91. A glycan (N-linked (GlcNAc...) asparagine) is linked at asparagine 38. The GPI-anchor amidated asparagine moiety is linked to residue asparagine 101. Positions 102-126 (GAISLLGKTALLVTSVLAAILKPCF) are cleaved as a propeptide — removed in mature form.

In terms of assembly, interacts with T-cell surface antigen CD2. In terms of processing, N- and O-glycosylated.

The protein resides in the cell membrane. Its subcellular location is the secreted. Functionally, potent inhibitor of the complement membrane attack complex (MAC) action, which protects self-cells from damage during complement activation. Acts by binding to the beta-haipins of C8 (C8A and C8B) components of the assembling MAC, forming an intermolecular beta-sheet that prevents incorporation of the multiple copies of C9 required for complete formation of the osmolytic pore. The protein is CD59 glycoprotein of Rattus norvegicus (Rat).